A 443-amino-acid chain; its full sequence is Glucose-6-phosphate isomerase (443 aa).

The active-site Proton donor is the Glu285. Active-site residues include His306 and Lys420.

Belongs to the GPI family.

It is found in the cytoplasm. It catalyses the reaction alpha-D-glucose 6-phosphate = beta-D-fructose 6-phosphate. The protein operates within carbohydrate biosynthesis; gluconeogenesis. It functions in the pathway carbohydrate degradation; glycolysis; D-glyceraldehyde 3-phosphate and glycerone phosphate from D-glucose: step 2/4. Catalyzes the reversible isomerization of glucose-6-phosphate to fructose-6-phosphate. The protein is Glucose-6-phosphate isomerase of Staphylococcus saprophyticus subsp. saprophyticus (strain ATCC 15305 / DSM 20229 / NCIMB 8711 / NCTC 7292 / S-41).